The following is a 349-amino-acid chain: Secondary metabolism regulator LAE1 (349 aa).

The tract at residues 1 to 46 (MSSRNAPSGCVAPSPATAAPPSPTNLRLTVGQSGSESANEPGGEPE) is disordered. Positions 25-38 (NLRLTVGQSGSESA) are enriched in polar residues.

It belongs to the methyltransferase superfamily. LaeA methyltransferase family. Component of the heterotrimeric velvet complex composed of LAE1, VEL1 and VEL2; VEL1 acting as a bridging protein between LAE1 and VEL2.

The protein resides in the nucleus. The catalysed reaction is L-methionyl-[protein] + S-adenosyl-L-methionine = S-methyl-L-methionyl-[protein] + S-adenosyl-L-homocysteine. In terms of biological role, methyltransferase that performs automethylation. No other methyl-accepting substrate has been identified yet. Component of the velvet transcription factor complex that acts as a global regulator for secondary metabolite gene expression. Controls the expression of the gamma-pentyl-pyrone gene clusters. Required for the expression of cellulase. Regulates asexual sporulation (conidiation) by environmental stimuli such as light and/or mechanical injury. Required for oxidative stress tolerance. Also plays a role in defense and parasitism on other fungi. This Hypocrea atroviridis (strain ATCC 20476 / IMI 206040) (Trichoderma atroviride) protein is Secondary metabolism regulator LAE1.